We begin with the raw amino-acid sequence, 1571 residues long: Pentafunctional AROM polypeptide (1571 aa).

Residues 1 to 380 (MTSVEKVSIL…YQLKAHQVSK (380 aa)) are 3-dehydroquinate synthase. NAD(+) is bound by residues 43-45 (DTN), 81-84 (ENNK), 112-114 (GGV), and aspartate 117. Arginine 128 provides a ligand contact to 7-phospho-2-dehydro-3-deoxy-D-arabino-heptonate. An NAD(+)-binding site is contributed by 137–138 (TS). 7-phospho-2-dehydro-3-deoxy-D-arabino-heptonate is bound by residues aspartate 144 and lysine 150. Lysine 159 provides a ligand contact to NAD(+). Asparagine 160 provides a ligand contact to 7-phospho-2-dehydro-3-deoxy-D-arabino-heptonate. Residues 177-180 (FLET) and asparagine 188 contribute to the NAD(+) site. Glutamate 192 provides a ligand contact to Zn(2+). 7-phospho-2-dehydro-3-deoxy-D-arabino-heptonate contacts are provided by residues 192 to 195 (EVVK) and lysine 244. Glutamate 254 functions as the Proton acceptor; for 3-dehydroquinate synthase activity in the catalytic mechanism. 7-phospho-2-dehydro-3-deoxy-D-arabino-heptonate is bound by residues 258–262 (RNLLN) and histidine 265. A Zn(2+)-binding site is contributed by histidine 265. Histidine 269 acts as the Proton acceptor; for 3-dehydroquinate synthase activity in catalysis. 7-phospho-2-dehydro-3-deoxy-D-arabino-heptonate is bound by residues histidine 281 and lysine 352. Residue histidine 281 coordinates Zn(2+). Positions 393 to 843 (VHPFDDKLIP…WDILHTKFKV (451 aa)) are EPSP synthase. The active-site For EPSP synthase activity is cysteine 825. A shikimate kinase region spans residues 868-1058 (KRSIIVIGMR…IPKKRSFYTS (191 aa)). 875-882 (GMRGAGKS) lines the ATP pocket. The 3-dehydroquinase stretch occupies residues 1059–1271 (LTFSDLTEVA…GNEGALDVAQ (213 aa)). Lysine 1204 functions as the Schiff-base intermediate with substrate; for 3-dehydroquinate dehydratase activity in the catalytic mechanism. The segment at 1284 to 1571 (EKHFWIVGNP…DVVHDAVVNQ (288 aa)) is shikimate dehydrogenase.

It in the N-terminal section; belongs to the sugar phosphate cyclases superfamily. Dehydroquinate synthase family. In the 2nd section; belongs to the EPSP synthase family. This sequence in the 3rd section; belongs to the shikimate kinase family. The protein in the 4th section; belongs to the type-I 3-dehydroquinase family. It in the C-terminal section; belongs to the shikimate dehydrogenase family. In terms of assembly, homodimer. Zn(2+) is required as a cofactor.

The protein resides in the cytoplasm. It carries out the reaction 7-phospho-2-dehydro-3-deoxy-D-arabino-heptonate = 3-dehydroquinate + phosphate. The catalysed reaction is 3-dehydroquinate = 3-dehydroshikimate + H2O. It catalyses the reaction shikimate + NADP(+) = 3-dehydroshikimate + NADPH + H(+). The enzyme catalyses shikimate + ATP = 3-phosphoshikimate + ADP + H(+). It carries out the reaction 3-phosphoshikimate + phosphoenolpyruvate = 5-O-(1-carboxyvinyl)-3-phosphoshikimate + phosphate. Its pathway is metabolic intermediate biosynthesis; chorismate biosynthesis; chorismate from D-erythrose 4-phosphate and phosphoenolpyruvate: step 2/7. The protein operates within metabolic intermediate biosynthesis; chorismate biosynthesis; chorismate from D-erythrose 4-phosphate and phosphoenolpyruvate: step 3/7. It functions in the pathway metabolic intermediate biosynthesis; chorismate biosynthesis; chorismate from D-erythrose 4-phosphate and phosphoenolpyruvate: step 4/7. It participates in metabolic intermediate biosynthesis; chorismate biosynthesis; chorismate from D-erythrose 4-phosphate and phosphoenolpyruvate: step 5/7. Its pathway is metabolic intermediate biosynthesis; chorismate biosynthesis; chorismate from D-erythrose 4-phosphate and phosphoenolpyruvate: step 6/7. The AROM polypeptide catalyzes 5 consecutive enzymatic reactions in prechorismate polyaromatic amino acid biosynthesis. This Scheffersomyces stipitis (strain ATCC 58785 / CBS 6054 / NBRC 10063 / NRRL Y-11545) (Yeast) protein is Pentafunctional AROM polypeptide.